The chain runs to 247 residues: Carboxy-S-adenosyl-L-methionine synthase (247 aa).

S-adenosyl-L-methionine is bound by residues tyrosine 39, 64-66 (GCS), 89-90 (DN), 117-118 (DI), asparagine 132, and arginine 199.

It belongs to the class I-like SAM-binding methyltransferase superfamily. Cx-SAM synthase family. In terms of assembly, homodimer.

The enzyme catalyses prephenate + S-adenosyl-L-methionine = carboxy-S-adenosyl-L-methionine + 3-phenylpyruvate + H2O. Functionally, catalyzes the conversion of S-adenosyl-L-methionine (SAM) to carboxy-S-adenosyl-L-methionine (Cx-SAM). The polypeptide is Carboxy-S-adenosyl-L-methionine synthase (Shigella sonnei (strain Ss046)).